Consider the following 261-residue polypeptide: Ribosomal RNA small subunit methyltransferase J (261 aa).

Residues 111-112, 127-128, 163-164, and D181 contribute to the S-adenosyl-L-methionine site; these read RD, ER, and SS.

This sequence belongs to the methyltransferase superfamily. RsmJ family.

Its subcellular location is the cytoplasm. It catalyses the reaction guanosine(1516) in 16S rRNA + S-adenosyl-L-methionine = N(2)-methylguanosine(1516) in 16S rRNA + S-adenosyl-L-homocysteine + H(+). In terms of biological role, specifically methylates the guanosine in position 1516 of 16S rRNA. The chain is Ribosomal RNA small subunit methyltransferase J from Shewanella sp. (strain ANA-3).